The chain runs to 780 residues: Pendrin (780 aa).

Residues 1–87 (MAARGGRSEP…YRVKEWLLSD (87 aa)) lie on the Cytoplasmic side of the membrane. The helical transmembrane segment at 88 to 108 (IISGVSTGLVGTLQGMAYALL) threads the bilayer. Residue A109 is a topological domain, extracellular. Residues 110–130 (AVPVQFGLYSAFFPILTYFVF) traverse the membrane as a helical segment. Residues 131-135 (GTSRH) lie on the Cytoplasmic side of the membrane. The helical transmembrane segment at 136 to 156 (ISVGPFPVVSLMVGSVVLSMA) threads the bilayer. The Extracellular portion of the chain corresponds to 157-191 (PDDHFLVPSGNGSALNSTTLDTGTRDAARVLLAST). Residues 192-212 (LTLLVGIIQLVFGGLQIGFIV) traverse the membrane as a helical segment. Residues 213 to 218 (RYLADP) lie on the Cytoplasmic side of the membrane. The chain crosses the membrane as a helical span at residues 219–239 (LVGGFTTAAAFQVLVSQLKIV). At 240–263 (LNVSTKNYNGILSIIYTLIEIFQN) the chain is on the extracellular side. A helical membrane pass occupies residues 264–284 (IGDTNIADFIAGLLTIIVCMA). The Cytoplasmic segment spans residues 285-295 (VKELNDRFKHR). A helical membrane pass occupies residues 296–316 (IPVPIPIEVIVTIIATAISYG). Residues 317-344 (ANLEKNYNAGIVKSIPSGFLPPVLPSVG) are Extracellular-facing. The helical transmembrane segment at 345-365 (LFSDMLAASFSIAVVAYAIAV) threads the bilayer. Residues 366–384 (SVGKVYATKHDYVIDGNQE) lie on the Cytoplasmic side of the membrane. Residues 385–405 (FIAFGISNVFSGFFSCFVATT) traverse the membrane as a helical segment. Residues 406-421 (ALSRTAVQESTGGKTQ) are Extracellular-facing. The helical transmembrane segment at 422–442 (VAGLISAVIVMVAIVALGRLL) threads the bilayer. Topologically, residues 443–448 (EPLQKS) are cytoplasmic. Residues 449–469 (VLAAVVIANLKGMFMQVCDVP) form a helical membrane-spanning segment. The Extracellular segment spans residues 470–486 (RLWKQNKTDAVIWVFTC). The chain crosses the membrane as a helical span at residues 487–507 (IMSIILGLDLGLLAGLLFALL). Residues 508–780 (TVVLRVQFPS…QDEAMRRLAS (273 aa)) lie on the Cytoplasmic side of the membrane. An STAS domain is found at 535-729 (HYKNLEEPEG…LTVHDAILHL (195 aa)).

It belongs to the SLC26A/SulP transporter (TC 2.A.53) family. As to quaternary structure, interacts with IQGAP1. This interaction enhances the chloride-bicarbonate exchange activity of SLC26A4. Highly expressed in the kidney (at protein level). Throughout the endolymphatic duct and sac, in distinct areas of the utricle and saccule, and in the external sulcus region within the cochlea. Expressed in the parotid gland.

Its subcellular location is the apical cell membrane. It localises to the cell membrane. The enzyme catalyses chloride(in) = chloride(out). The catalysed reaction is iodide(out) = iodide(in). It carries out the reaction hydrogencarbonate(in) + chloride(out) = hydrogencarbonate(out) + chloride(in). It catalyses the reaction iodide(in) + hydrogencarbonate(out) = iodide(out) + hydrogencarbonate(in). The enzyme catalyses iodide(in) + chloride(out) = iodide(out) + chloride(in). The catalysed reaction is formate(in) + chloride(out) = formate(out) + chloride(in). In terms of biological role, sodium-independent transporter of chloride and iodide. Mediates electroneutral iodide-chloride, iodide-bicarbonate and chloride-bicarbonate exchange with 1:1 stoichiometry. Mediates elctroneutral chloride-formate exchange. This is Pendrin (Slc26a4) from Mus musculus (Mouse).